The chain runs to 378 residues: Cobalt-precorrin-5B C(1)-methyltransferase (378 aa).

This sequence belongs to the CbiD family.

The catalysed reaction is Co-precorrin-5B + S-adenosyl-L-methionine = Co-precorrin-6A + S-adenosyl-L-homocysteine. Its pathway is cofactor biosynthesis; adenosylcobalamin biosynthesis; cob(II)yrinate a,c-diamide from sirohydrochlorin (anaerobic route): step 6/10. In terms of biological role, catalyzes the methylation of C-1 in cobalt-precorrin-5B to form cobalt-precorrin-6A. The polypeptide is Cobalt-precorrin-5B C(1)-methyltransferase (Synechocystis sp. (strain ATCC 27184 / PCC 6803 / Kazusa)).